The sequence spans 376 residues: Alpha-2,8-sialyltransferase 8E (376 aa).

The Cytoplasmic portion of the chain corresponds to 1-17; it reads MRYADPSANRDLLGSRT. A helical; Signal-anchor for type II membrane protein membrane pass occupies residues 18-38; that stretch reads LLFIFICAFALVTLLQQILYG. Topologically, residues 39-376 are lumenal; the sequence is RNYIKRYFEF…RVHTGTCSCC (338 aa). N-linked (GlcNAc...) asparagine glycosylation is found at asparagine 56 and asparagine 96. Intrachain disulfides connect cysteine 164–cysteine 313 and cysteine 178–cysteine 373. Residues asparagine 192 and 214 to 216 each bind substrate; that span reads NPS. 2 N-linked (GlcNAc...) asparagine glycosylation sites follow: asparagine 241 and asparagine 284. 300–302 contacts substrate; the sequence is STG. Histidine 348 (proton donor/acceptor) is an active-site residue.

It belongs to the glycosyltransferase 29 family. In terms of tissue distribution, expressed in fetal and adult brain, adult heart and skeletal muscle. Expressed in fetal and adult brain, not detected in adult heart and skeletal muscle.

It localises to the golgi apparatus membrane. It carries out the reaction a ganglioside GT1b (d18:1(4E)) + CMP-N-acetyl-beta-neuraminate = a ganglioside GQ1b (d18:1(4E)) + CMP + H(+). The enzyme catalyses a ganglioside GD3 (d18:1(4E)) + CMP-N-acetyl-beta-neuraminate = a ganglioside GT3 (d18:1(4E)) + CMP + H(+). The catalysed reaction is a ganglioside GD1a (d18:1(4E)) + CMP-N-acetyl-beta-neuraminate = a ganglioside GT1a (d18:1(4E)) + CMP + H(+). It catalyses the reaction a ganglioside GM1b (d18:1(4E)) + CMP-N-acetyl-beta-neuraminate = a ganglioside GD1c (d18:1(4E)) + CMP + H(+). It carries out the reaction a ganglioside GQ1c (d18:1(4E)) + CMP-N-acetyl-beta-neuraminate = a ganglioside GP1c (d18:1(4E)) + CMP + H(+). The protein operates within protein modification; protein glycosylation. In terms of biological role, involved in the synthesis of gangliosides GD1c, GT1a, GQ1b, GP1c and GT3 from GD1a, GT1b, GM1b and GD3 respectively. In Homo sapiens (Human), this protein is Alpha-2,8-sialyltransferase 8E.